Reading from the N-terminus, the 160-residue chain is Cytochrome b6-f complex subunit 4 (160 aa).

3 helical membrane-spanning segments follow: residues Leu36–Val56, Leu95–Glu115, and Ala131–Ile151.

This sequence belongs to the cytochrome b family. PetD subfamily. The 4 large subunits of the cytochrome b6-f complex are cytochrome b6, subunit IV (17 kDa polypeptide, petD), cytochrome f and the Rieske protein, while the 4 small subunits are petG, petL, petM and petN. The complex functions as a dimer.

The protein resides in the plastid. It localises to the cyanelle thylakoid membrane. In terms of biological role, component of the cytochrome b6-f complex, which mediates electron transfer between photosystem II (PSII) and photosystem I (PSI), cyclic electron flow around PSI, and state transitions. In Cyanophora paradoxa, this protein is Cytochrome b6-f complex subunit 4.